Consider the following 639-residue polypeptide: Chaperone protein DnaK (639 aa).

Phosphothreonine; by autocatalysis is present on T198. Over residues 603-618 the composition is skewed to low complexity; the sequence is AKAQTQGGAQEGAAKQ. Positions 603-639 are disordered; it reads AKAQTQGGAQEGAAKQSNATADDVVDAEFEEVKDDKK. A compositionally biased stretch (acidic residues) spans 625 to 639; it reads DVVDAEFEEVKDDKK.

Belongs to the heat shock protein 70 family.

Functionally, acts as a chaperone. This is Chaperone protein DnaK from Shewanella sp. (strain MR-4).